A 117-amino-acid chain; its full sequence is Large ribosomal subunit protein bL20 (117 aa).

This sequence belongs to the bacterial ribosomal protein bL20 family.

In terms of biological role, binds directly to 23S ribosomal RNA and is necessary for the in vitro assembly process of the 50S ribosomal subunit. It is not involved in the protein synthesizing functions of that subunit. This Vibrio campbellii (strain ATCC BAA-1116) protein is Large ribosomal subunit protein bL20.